The following is a 97-amino-acid chain: YcgL domain-containing protein PSEEN4034 (97 aa).

A YcgL domain is found at 3–87; the sequence is RICSIYKSPR…PDDDYIEHLP (85 aa).

In Pseudomonas entomophila (strain L48), this protein is YcgL domain-containing protein PSEEN4034.